The sequence spans 408 residues: Aminoacylase-1 (408 aa).

H80 serves as a coordination point for Zn(2+). Residue D82 is part of the active site. D113 is a binding site for Zn(2+). The active-site Proton acceptor is the E147. The Zn(2+) site is built by E148, E175, and H373.

It belongs to the peptidase M20A family. As to quaternary structure, homodimer. Interacts with SPHK1. Zn(2+) is required as a cofactor.

It localises to the cytoplasm. It carries out the reaction an N-acyl-L-amino acid + H2O = an L-alpha-amino acid + a carboxylate. It catalyses the reaction N-acetyl-L-methionine + H2O = L-methionine + acetate. The catalysed reaction is N-acetyl-L-glutamine + H2O = L-glutamine + acetate. Catalyzes the hydrolysis of N-acetylated amino acids to acetate and free amino acids. This Pongo abelii (Sumatran orangutan) protein is Aminoacylase-1 (ACY1).